We begin with the raw amino-acid sequence, 76 residues long: Protein sprouty homolog 1 (76 aa).

In terms of domain architecture, SPR spans 1–52; that stretch reads NPCSCSQSHCCSRYLCMGAMSLFLPCLLCYPPAKGCLKLCRGCYDRVNRPGC.

This sequence belongs to the sprouty family. In terms of tissue distribution, brain and interlimb region.

It localises to the cytoplasm. Its subcellular location is the membrane. Functionally, inhibits fibroblast growth factor (FGF)-induced retinal lens fiber differentiation. Inhibits TGFB-induced epithelial-to-mesenchymal transition in lens epithelial cells. In Gallus gallus (Chicken), this protein is Protein sprouty homolog 1 (SPRY1).